A 211-amino-acid polypeptide reads, in one-letter code: MAKVLYITAHPHDETVSYSMATAKAFIESYKEANPSDEVVHIDLYKENIPHIDADVFAGWGKLQSGAGFDTLSAEEQAKVARLNELSDQFVSADKYVFVSPLWNFSFPPVLKAYIDSVAVAGKTFKYTEQGPVGLLTDKKALHIQARGGYYTEGPAAELEAGHRYLGTIASFFGIPSFEGLIVEGHNAEPAKAEQIKADAIERAKALGKTF.

17–19 (SYS) contacts FMN.

It belongs to the azoreductase type 1 family. Homodimer. FMN is required as a cofactor.

The catalysed reaction is 2 a quinone + NADH + H(+) = 2 a 1,4-benzosemiquinone + NAD(+). The enzyme catalyses N,N-dimethyl-1,4-phenylenediamine + anthranilate + 2 NAD(+) = 2-(4-dimethylaminophenyl)diazenylbenzoate + 2 NADH + 2 H(+). In terms of biological role, quinone reductase that provides resistance to thiol-specific stress caused by electrophilic quinones. Also exhibits azoreductase activity. Catalyzes the reductive cleavage of the azo bond in aromatic azo compounds to the corresponding amines. This Bacillus pumilus (strain SAFR-032) protein is FMN-dependent NADH:quinone oxidoreductase.